A 104-amino-acid chain; its full sequence is Fusaric acid biosynthesis protein 2 (104 aa).

It belongs to the YciI family.

Its pathway is mycotoxin biosynthesis. Functionally, part of the gene cluster that mediates the biosynthesis of fusaric acid, a mycotoxin with low to moderate toxicity to animals and humans, but with high phytotoxic properties. L-aspartate is suggested as fusaric acid amino acid precursor that is activated and further processed to O-acetyl-L-homoserine by cluster enzymes aspartate kinase FUB3 and homoserine O-acetyltransferase FUB5, as well as enzymes of the primary metabolism. The polyketide synthase (PKS) FUB1 generates the triketide trans-2-hexenal which is presumptively released by the hydrolase FUB4 and linked to the NRPS-bound amino acid precursor by NAD(P)-dependent dehydrogenase FUB6. FUB1, FUB4, and the non-canonical NRPS Fub8 may form an enzyme complex. Further processing of the NRPS-bound intermediate might be carried out by FUB6 and the sulfhydrylase FUB7, enabling a spontaneous electrocyclization to close the carbon backbone of fusaric acid. Dihydrofusaric acid is likely to be released via reduction by the thioester reductase (TR) domain of FUB8 whereupon the final oxidation to fusaric acid may (also) be performed by the FMN-dependent dehydrogenase FUB9. The sequence is that of Fusaric acid biosynthesis protein 2 from Gibberella moniliformis (strain M3125 / FGSC 7600) (Maize ear and stalk rot fungus).